A 291-amino-acid chain; its full sequence is Elongation factor Ts (291 aa).

The tract at residues 79–82 is involved in Mg(2+) ion dislocation from EF-Tu; it reads TDFV.

This sequence belongs to the EF-Ts family.

It is found in the cytoplasm. Functionally, associates with the EF-Tu.GDP complex and induces the exchange of GDP to GTP. It remains bound to the aminoacyl-tRNA.EF-Tu.GTP complex up to the GTP hydrolysis stage on the ribosome. The sequence is that of Elongation factor Ts from Dinoroseobacter shibae (strain DSM 16493 / NCIMB 14021 / DFL 12).